A 122-amino-acid chain; its full sequence is Large ribosomal subunit protein uL14 (122 aa).

This sequence belongs to the universal ribosomal protein uL14 family. As to quaternary structure, part of the 50S ribosomal subunit. Forms a cluster with proteins L3 and L19. In the 70S ribosome, L14 and L19 interact and together make contacts with the 16S rRNA in bridges B5 and B8.

In terms of biological role, binds to 23S rRNA. Forms part of two intersubunit bridges in the 70S ribosome. The sequence is that of Large ribosomal subunit protein uL14 from Caldanaerobacter subterraneus subsp. tengcongensis (strain DSM 15242 / JCM 11007 / NBRC 100824 / MB4) (Thermoanaerobacter tengcongensis).